The following is a 148-amino-acid chain: Large ribosomal subunit protein bL9 (148 aa).

The protein belongs to the bacterial ribosomal protein bL9 family.

In terms of biological role, binds to the 23S rRNA. This Parafrankia sp. (strain EAN1pec) protein is Large ribosomal subunit protein bL9.